The sequence spans 261 residues: Auxin-responsive protein IAA10 (261 aa).

The interval 1 to 43 is disordered; sequence MNGLQEVCSSSGSVMIGLPAEEDENAAHSSEDSSCPDESVSET. An EAR-like (transcriptional repression) motif is present at residues 45-49; it reads LDLAL. Residues 62 to 90 form a disordered region; the sequence is LSSSSSSLTRESGTKRSADSSPAAASNAT. Over residues 80–89 the composition is skewed to low complexity; the sequence is DSSPAAASNA. In terms of domain architecture, PB1 spans 151–253; sequence SMLVKVTMDG…SVTRLRIMKT (103 aa).

Belongs to the Aux/IAA family. Homodimers and heterodimers. As to expression, preferentially expressed in vegetative organs.

It localises to the nucleus. Its function is as follows. Aux/IAA proteins are short-lived transcriptional factors that function as repressors of early auxin response genes at low auxin concentrations. Repression is thought to result from the interaction with auxin response factors (ARFs), proteins that bind to the auxin-responsive promoter element (AuxRE). Formation of heterodimers with ARF proteins may alter their ability to modulate early auxin response genes expression. This Arabidopsis thaliana (Mouse-ear cress) protein is Auxin-responsive protein IAA10 (IAA10).